We begin with the raw amino-acid sequence, 462 residues long: GTPase Der (462 aa).

EngA-type G domains lie at 9-171 (KTIA…GLTK) and 201-372 (IQVG…ECFS). GTP-binding positions include 15-22 (GQPNVGKS), 62-66 (DTGGM), 123-126 (NKID), 207-214 (GRVNVGKS), 254-258 (DTAGI), and 318-321 (NKWD). Residues 373–457 (KRIPTSLLNS…PLIINAKDKK (85 aa)) form the KH-like domain.

It belongs to the TRAFAC class TrmE-Era-EngA-EngB-Septin-like GTPase superfamily. EngA (Der) GTPase family. As to quaternary structure, associates with the 50S ribosomal subunit.

GTPase that plays an essential role in the late steps of ribosome biogenesis. In Helicobacter acinonychis (strain Sheeba), this protein is GTPase Der.